Here is a 181-residue protein sequence, read N- to C-terminus: RING-H2 finger protein ATL56 (181 aa).

Positions 1-24 (MPPTNNYRISGEPPSTTPSHPPPK) are disordered. Pro residues predominate over residues 15-24 (STTPSHPPPK). The chain crosses the membrane as a helical span at residues 32–52 (LFLVGVIMFSIFFLFLVLIGI). An RING-type; atypical zinc finger spans residues 110-152 (CVVCFDGFRQGQWCRNLPGCGHVFHRKCVDTWLLKASTCPICR).

It belongs to the RING-type zinc finger family. ATL subfamily.

The protein localises to the membrane. It catalyses the reaction S-ubiquitinyl-[E2 ubiquitin-conjugating enzyme]-L-cysteine + [acceptor protein]-L-lysine = [E2 ubiquitin-conjugating enzyme]-L-cysteine + N(6)-ubiquitinyl-[acceptor protein]-L-lysine.. The protein operates within protein modification; protein ubiquitination. In Arabidopsis thaliana (Mouse-ear cress), this protein is RING-H2 finger protein ATL56 (ATL56).